The following is a 192-amino-acid chain: Bifunctional protein PyrR (192 aa).

The PRPP-binding signature appears at 107-119 (VVLVDDVLFSGRT).

The protein belongs to the purine/pyrimidine phosphoribosyltransferase family. PyrR subfamily.

The enzyme catalyses UMP + diphosphate = 5-phospho-alpha-D-ribose 1-diphosphate + uracil. Regulates the transcription of the pyrimidine nucleotide (pyr) operon in response to exogenous pyrimidines. Its function is as follows. Also displays a weak uracil phosphoribosyltransferase activity which is not physiologically significant. This chain is Bifunctional protein PyrR, found in Corynebacterium efficiens (strain DSM 44549 / YS-314 / AJ 12310 / JCM 11189 / NBRC 100395).